The chain runs to 481 residues: uncharacterized protein (481 aa).

10 helical membrane-spanning segments follow: residues 30–50 (TIII…FVQF), 96–116 (AIAL…FIGM), 154–174 (CMAV…FNSV), 196–216 (ISLV…IAII), 220–240 (LVPM…GMHI), 250–270 (IVQS…ALVS), 311–331 (MLGV…IILL), 354–374 (IGEF…YSSI), 391–411 (KPWL…FGAV), and 424–444 (VMAV…PIVW).

The protein belongs to the alanine or glycine:cation symporter (AGCS) (TC 2.A.25) family.

The protein resides in the cell inner membrane. This is an uncharacterized protein from Haemophilus influenzae (strain ATCC 51907 / DSM 11121 / KW20 / Rd).